The chain runs to 501 residues: MSNFPWLTIIVLLPISAGLLIPLLPNKGNRIIRWYTLGICLVEFLLITYIFCNYFHFDNQFIELKEDYNWINLLDFHWRLGIDGLSIGLILLTGFITTLATLAAWPITRNPRLSYFLMLAMYSGQVGLFASQDILLFFFMWELELIPVYLLLSMWGGKRRLYAATKFILYTAGSSVFLLMGALTMGLYGSDGPTLDFENLANRSYPIGLEIILYLGFFIAYAVKLPMVPLHTWLPDTHGEAHYSTCMLLAGILLKMGGYGLIRINMELLSHAHSIFAPWLVVIGAIQIVYSALTSLSQLNLKRRIAYSSVSHMGFVLIGIGSTTDIGVNGAILQMISHGLIGAALFFSAGVTYDRTRTLFLNQMGGIATSIPKIFTMFSSFSMASLALPGLSGFVAELMIFLGIVSSQNFSFLFKVVIIIVAATGIILTPIYLLSMLRQMFYGYRIIKNLTSYVTDAGPREIFIFICLFFPIIGIGFYPKLVLSLSNSKVESIISGNFSSK.

15 helical membrane-spanning segments follow: residues 4 to 24 (FPWL…IPLL), 37 to 57 (LGIC…YFHF), 87 to 107 (IGLI…AWPI), 113 to 130 (LSYF…GLFA), 134 to 154 (ILLF…LLSM), 167 to 187 (FILY…TMGL), 207 to 227 (IGLE…KLPM), 242 to 262 (HYST…YGLI), 274 to 294 (SIFA…SALT), 310 to 330 (VSHM…GVNG), 331 to 351 (AILQ…SAGV), 364 to 384 (MGGI…FSMA), 385 to 405 (SLAL…LGIV), 416 to 436 (VVII…LLSM), and 462 to 482 (IFIF…PKLV).

This sequence belongs to the complex I subunit 4 family.

It is found in the plastid. Its subcellular location is the chloroplast thylakoid membrane. The catalysed reaction is a plastoquinone + NADH + (n+1) H(+)(in) = a plastoquinol + NAD(+) + n H(+)(out). It carries out the reaction a plastoquinone + NADPH + (n+1) H(+)(in) = a plastoquinol + NADP(+) + n H(+)(out). The sequence is that of NAD(P)H-quinone oxidoreductase chain 4, chloroplastic (ndhD) from Anthoceros angustus (Hornwort).